The chain runs to 71 residues: DNA-directed RNA polymerase subunit omega (71 aa).

It belongs to the RNA polymerase subunit omega family. As to quaternary structure, the RNAP catalytic core consists of 2 alpha, 1 beta/beta' and 1 omega subunit. When a sigma factor is associated with the core the holoenzyme is formed, which can initiate transcription.

The enzyme catalyses RNA(n) + a ribonucleoside 5'-triphosphate = RNA(n+1) + diphosphate. Its function is as follows. Promotes RNA polymerase assembly. Latches the N- and C-terminal regions of the beta' subunit thereby facilitating its interaction with the beta and alpha subunits. The polypeptide is DNA-directed RNA polymerase subunit omega (Wolinella succinogenes (strain ATCC 29543 / DSM 1740 / CCUG 13145 / JCM 31913 / LMG 7466 / NCTC 11488 / FDC 602W) (Vibrio succinogenes)).